Consider the following 185-residue polypeptide: Sulfopyruvate decarboxylase subunit beta (185 aa).

It belongs to the TPP enzyme family. Heterododecamer composed of 6 subunits alpha and 6 subunits beta. It depends on thiamine diphosphate as a cofactor.

The enzyme catalyses 3-sulfopyruvate + H(+) = sulfoacetaldehyde + CO2. It participates in cofactor biosynthesis; coenzyme M biosynthesis; sulfoacetaldehyde from phosphoenolpyruvate and sulfite: step 4/4. Its function is as follows. Involved in the biosynthesis of the coenzyme M (2-mercaptoethanesulfonic acid). Catalyzes the decarboxylation of sulfopyruvate to sulfoacetaldehyde. The protein is Sulfopyruvate decarboxylase subunit beta of Methanothermobacter thermautotrophicus (strain ATCC 29096 / DSM 1053 / JCM 10044 / NBRC 100330 / Delta H) (Methanobacterium thermoautotrophicum).